We begin with the raw amino-acid sequence, 44 residues long: Photosystem I reaction center subunit IX (44 aa).

A helical transmembrane segment spans residues Y7 to I27.

Belongs to the PsaJ family.

It is found in the plastid membrane. Its function is as follows. May help in the organization of the PsaE and PsaF subunits. The sequence is that of Photosystem I reaction center subunit IX from Cuscuta gronovii (Common dodder).